The chain runs to 376 residues: Chaperone protein DnaJ (376 aa).

The J domain occupies 4-70; that stretch reads DYYQILGVSK…QKRAAYDRFG (67 aa). Residues 139–217 form a CR-type zinc finger; it reads GVEKNISFSS…CHGLGRYHKQ (79 aa). 8 residues coordinate Zn(2+): cysteine 152, cysteine 155, cysteine 169, cysteine 172, cysteine 191, cysteine 194, cysteine 205, and cysteine 208. CXXCXGXG motif repeat units follow at residues 152–159, 169–176, 191–198, and 205–212; these read CDTCHGSG, CDACGGVG, CHKCQGNG, and CKKCHGLG.

It belongs to the DnaJ family. As to quaternary structure, homodimer. The cofactor is Zn(2+).

Its subcellular location is the cytoplasm. Participates actively in the response to hyperosmotic and heat shock by preventing the aggregation of stress-denatured proteins and by disaggregating proteins, also in an autonomous, DnaK-independent fashion. Unfolded proteins bind initially to DnaJ; upon interaction with the DnaJ-bound protein, DnaK hydrolyzes its bound ATP, resulting in the formation of a stable complex. GrpE releases ADP from DnaK; ATP binding to DnaK triggers the release of the substrate protein, thus completing the reaction cycle. Several rounds of ATP-dependent interactions between DnaJ, DnaK and GrpE are required for fully efficient folding. Also involved, together with DnaK and GrpE, in the DNA replication of plasmids through activation of initiation proteins. In Rickettsia bellii (strain OSU 85-389), this protein is Chaperone protein DnaJ.